Here is a 390-residue protein sequence, read N- to C-terminus: 2-oxoisovalerate dehydrogenase subunit beta, mitochondrial (390 aa).

The N-terminal 48 residues, 1 to 48, are a transit peptide targeting the mitochondrion; the sequence is MAAVAARAGGLLWLRAAGAERRRCGLRCAALVQGFLQPGGEDTAQKRR. Tyrosine 150 contacts thiamine diphosphate. Residues glycine 176, leucine 178, threonine 179, cysteine 226, and aspartate 229 each coordinate K(+). N6-acetyllysine is present on lysine 230. K(+) is bound at residue asparagine 231. The residue at position 239 (lysine 239) is an N6-acetyllysine.

As to quaternary structure, heterotetramer of 2 alpha/BCKDHA and 2 beta chains/BCKDHB that forms the branched-chain alpha-keto acid decarboxylase (E1) component of the BCKD complex. The branched-chain alpha-ketoacid dehydrogenase is a large complex composed of three major building blocks E1, E2 and E3. It is organized around E2, a 24-meric cubic core composed of DBT, to which are associated 6 to 12 copies of E1, and approximately 6 copies of the dehydrogenase E3, a DLD dimer. It depends on thiamine diphosphate as a cofactor.

Its subcellular location is the mitochondrion matrix. The catalysed reaction is N(6)-[(R)-lipoyl]-L-lysyl-[protein] + 3-methyl-2-oxobutanoate + H(+) = N(6)-[(R)-S(8)-2-methylpropanoyldihydrolipoyl]-L-lysyl-[protein] + CO2. Its function is as follows. Together with BCKDHA forms the heterotetrameric E1 subunit of the mitochondrial branched-chain alpha-ketoacid dehydrogenase (BCKD) complex. The BCKD complex catalyzes the multi-step oxidative decarboxylation of alpha-ketoacids derived from the branched-chain amino-acids valine, leucine and isoleucine producing CO2 and acyl-CoA which is subsequently utilized to produce energy. The E1 subunit catalyzes the first step with the decarboxylation of the alpha-ketoacid forming an enzyme-product intermediate. A reductive acylation mediated by the lipoylamide cofactor of E2 extracts the acyl group from the E1 active site for the next step of the reaction. The protein is 2-oxoisovalerate dehydrogenase subunit beta, mitochondrial of Mus musculus (Mouse).